A 483-amino-acid polypeptide reads, in one-letter code: Glutamate--tRNA ligase (483 aa).

The 'HIGH' region signature appears at 11–21 (PSPTGLLHIGN). A 'KMSKS' region motif is present at residues 255 to 259 (KLSKR). An ATP-binding site is contributed by Lys-258.

The protein belongs to the class-I aminoacyl-tRNA synthetase family. Glutamate--tRNA ligase type 1 subfamily. In terms of assembly, monomer.

The protein localises to the cytoplasm. It catalyses the reaction tRNA(Glu) + L-glutamate + ATP = L-glutamyl-tRNA(Glu) + AMP + diphosphate. Catalyzes the attachment of glutamate to tRNA(Glu) in a two-step reaction: glutamate is first activated by ATP to form Glu-AMP and then transferred to the acceptor end of tRNA(Glu). This Lactococcus lactis subsp. cremoris (strain SK11) protein is Glutamate--tRNA ligase.